Consider the following 361-residue polypeptide: 3-galactosyl-N-acetylglucosaminide 4-alpha-L-fucosyltransferase FUT3 (361 aa).

At 1–15 (MDPLGAAKPQWPWRR) the chain is on the cytoplasmic side. A helical; Signal-anchor for type II membrane protein transmembrane segment spans residues 16 to 34 (CLAALLFQLLVAVCFFSYL). Topologically, residues 35–361 (RVSRDDATGS…TVRSIAAWFT (327 aa)) are lumenal. Residues 39 to 58 (DDATGSPRAPSGSSRQDTTP) form a disordered region. Residues N154 and N185 are each glycosylated (N-linked (GlcNAc...) asparagine).

This sequence belongs to the glycosyltransferase 10 family. Glycosylated. As to expression, highly expressed in stomach, colon, small intestine, lung and kidney and to a lesser extent in salivary gland, bladder, uterus and liver.

It is found in the golgi apparatus. The protein resides in the golgi stack membrane. The enzyme catalyses a beta-D-galactosyl-(1-&gt;3)-N-acetyl-beta-D-glucosaminyl derivative + GDP-beta-L-fucose = a beta-D-galactosyl-(1-&gt;3)-[alpha-L-fucosyl-(1-&gt;4)]-N-acetyl-beta-D-glucosaminyl derivative + GDP + H(+). It carries out the reaction an N-acetyl-alpha-neuraminyl-(2-&gt;3)-beta-D-galactosyl-(1-&gt;4)-N-acetyl-beta-D-glucosaminyl derivative + GDP-beta-L-fucose = an alpha-Neu5Ac-(2-&gt;3)-beta-D-Gal-(1-&gt;4)-[alpha-L-Fuc-(1-&gt;3)]-beta-D-GlcNAc derivative + GDP + H(+). The catalysed reaction is a beta-D-galactosyl-(1-&gt;4)-N-acetyl-beta-D-glucosaminyl derivative + GDP-beta-L-fucose = a beta-D-galactosyl-(1-&gt;4)-[alpha-L-fucosyl-(1-&gt;3)]-N-acetyl-beta-D-glucosaminyl derivative + GDP + H(+). It catalyses the reaction an alpha-Neu5Ac-(2-&gt;3)-beta-D-Gal-(1-&gt;4)-beta-D-GlcNAc-(1-&gt;3)-beta-D-Gal-(1-&gt;4)-[alpha-L-Fuc-(1-&gt;3)]-beta-D-GlcNAc derivative + GDP-beta-L-fucose = an alpha-Neu5Ac-(2-&gt;3)-beta-D-Gal-(1-&gt;4)-[alpha-L-Fuc-(1-&gt;3)]-beta-D-GlcNAc-(1-&gt;3)-beta-D-Gal-(1-&gt;4)-[alpha-L-Fuc-(1-&gt;3)]-beta-D-GlcNAc derivative + GDP + H(+). The enzyme catalyses Lc4Cer + GDP-beta-L-fucose = a lactoside III(4)-a-Fuc-Lc4Cer + GDP + H(+). It carries out the reaction a beta-D-Gal-(1-&gt;3)-beta-D-GlcNAc-(1-&gt;3)-beta-D-Gal-(1-&gt;4)-beta-D-Glc-(1&lt;-&gt;1')-Cer(d18:1(4E)) + GDP-beta-L-fucose = a III(4)-a-Fuc-Lc4Cer(d18:1(4E)) + GDP + H(+). The catalysed reaction is N-acetyl-alpha-neuraminosyl-(2-&gt;3)-beta-D-galactosyl-(1-&gt;3)-[N-acetyl-alpha-neuraminosyl-(2-&gt;6)]-N-acetyl-beta-D-glucosaminyl-(1-&gt;3)-beta-D-galactosyl-(1-&gt;4)-beta-D-glucosyl-(1&lt;-&gt;1')-N-acyl-sphing-4-enine + GDP-beta-L-fucose = N-acetyl-alpha-neuraminosyl-(2-&gt;3)-beta-D-galactosyl-(1-&gt;3)-alpha-L-fucosyl-(1-&gt;4)-[N-acetyl-alpha-neuraminosyl-(2-&gt;6)-N-acetyl-beta-D-glucosaminyl-(1-&gt;3)]-beta-D-galactosyl-(1-&gt;4)-beta-D-glucosyl-(1&lt;-&gt;1')-N-acyl-sphing-4-enine + GDP + H(+). It catalyses the reaction N-acetyl-alpha-neuraminosyl-(2-&gt;3)-beta-D-galactosyl-(1-&gt;3)-N-acetyl-beta-D-glucosaminyl-(1-&gt;3)-beta-D-galactosyl-(1-&gt;4)-beta-D-glucosyl-(1&lt;-&gt;1')-N-acyl-sphing-4-enine + GDP-beta-L-fucose = N-acetyl-alpha-neuraminosyl-(2-&gt;3)-beta-D-galactosyl-(1-&gt;3)-alpha-L-fucosyl-(1-&gt;4)-[N-acetyl-beta-D-glucosaminyl-(1-&gt;3)]-beta-D-galactosyl-(1-&gt;4)-beta-D-glucosyl-(1&lt;-&gt;1')-N-acyl-sphing-4-enine + GDP + H(+). The enzyme catalyses beta-D-galactosyl-(1-&gt;3)-N-acetyl-D-glucosamine + GDP-beta-L-fucose = beta-D-galactosyl-(1-&gt;3)-[alpha-L-fucosyl-(1-&gt;4)]-N-acetyl-D-glucosamine + GDP + H(+). It carries out the reaction alpha-L-Fuc-(1-&gt;2)-beta-D-Gal-(1-&gt;3)-D-GlcNAc + GDP-beta-L-fucose = alpha-L-Fuc-(1-&gt;2)-beta-D-Gal-(1-&gt;3)-[alpha-L-Fuc-(1-&gt;4)]-D-GlcNAc + GDP + H(+). The catalysed reaction is alpha-L-Fuc-(1-&gt;2)-beta-D-Gal-(1-&gt;4)-D-GlcNAc + GDP-beta-L-fucose = alpha-L-Fuc-(1-&gt;2)-beta-D-Gal-(1-&gt;4)-[alpha-L-Fuc-(1-&gt;3)]-D-GlcNAc + GDP + H(+). It catalyses the reaction beta-D-galactosyl-(1-&gt;4)-N-acetyl-D-glucosamine + GDP-beta-L-fucose = beta-D-galactosyl-(1-&gt;4)-[alpha-L-fucosyl-(1-&gt;3)]-N-acetyl-D-glucosamine + GDP + H(+). The enzyme catalyses lactose + GDP-beta-L-fucose = beta-D-galactosyl-(1-&gt;4)-[alpha-L-fucosyl-(1-&gt;3)]-D-glucose + GDP + H(+). It carries out the reaction an alpha-Neu5Ac-(2-&gt;3)-beta-D-Gal-(1-&gt;3)-D-GlcNAc derivative + GDP-beta-L-fucose = an alpha-Neu5Ac-(2-&gt;3)-beta-D-Gal-(1-&gt;3)-[alpha-L-Fuc-(1-&gt;4)]-beta-D-GlcNAc derivative + GDP + H(+). It functions in the pathway protein modification; protein glycosylation. Functionally, catalyzes the transfer of L-fucose, from a guanosine diphosphate-beta-L-fucose, to both the subterminal N-acetyl glucosamine (GlcNAc) of type 1 chain (beta-D-Gal-(1-&gt;3)-beta-D-GlcNAc) glycolipids and oligosaccharides via an alpha(1,4) linkage, and the subterminal glucose (Glc) or GlcNAc of type 2 chain (beta-D-Gal-(1-&gt;4)-beta-D-GlcNAc) oligosaccharides via an alpha(1,3) linkage, independently of the presence of terminal alpha-L-fucosyl-(1,2) moieties on the terminal galactose of these acceptors. Through its catalytic activity, participates in the synthesis of antigens of the Lewis blood group system, i.e. Lewis a (Le(a)), lewis b (Le(b)), Lewis x/SSEA-1 (Le(x)) and lewis y (Le(y)) antigens. Also catalyzes the transfer of L-fucose to subterminal GlcNAc of sialyl- and disialyl-lactotetraosylceramide to produce sialyl Lewis a (sLe(a)) and disialyl Lewis a via an alpha(1,4) linkage and therefore may regulate cell surface sLe(a) expression and consequently regulates adhesive properties to E-selectin, cell proliferation and migration. Catalyzes the transfer of an L-fucose to 3'-sialyl-N-acetyllactosamine by an alpha(1,3) linkage, which allows the formation of sialyl-Lewis x structure and therefore may regulate the sialyl-Lewis x surface antigen expression and consequently adhesive properties to E-selectin. Prefers type 1 chain over type 2 acceptors. Type 1 tetrasaccharide is a better acceptor than type 1 disaccharide suggesting that a beta anomeric configuration of GlcNAc in the substrate is preferred. Lewis-positive (Le(+)) individuals have an active enzyme while Lewis-negative (Le(-)) individuals have an inactive enzyme. This chain is 3-galactosyl-N-acetylglucosaminide 4-alpha-L-fucosyltransferase FUT3, found in Homo sapiens (Human).